The primary structure comprises 537 residues: Mitochondria-eating protein (537 aa).

Residues 1–273 are interaction with YWHAG/14-3-3 protein gamma; that stretch reads MADNLRRLVS…PCSRSHSRSR (273 aa). S85, S127, S154, and S157 each carry phosphoserine. A coiled-coil region spans residues 115-253; it reads GTRDIQQLDA…SAEKSVLQGR (139 aa). Disordered regions lie at residues 171–221 and 249–293; these read QLKS…ANQR and VLQG…AKLS. The segment covering 179-217 has biased composition (basic and acidic residues); sequence EESRHRNSDRRRSEKRGSERRRVELRGSEQRVSDLDRRS. Residues 253–287 show a composition bias toward low complexity; it reads RSARSRSPSPAPCSRSHSRSRSTSPSSAKARTPSP. S286 and S508 each carry phosphoserine.

This sequence belongs to the MIEAP family. In terms of assembly, interacts (via coiled-coil domains) with BNIP3L (via BH3 domain). Interacts (via coiled-coil domains) with BNIP3 (via BH3 domain). Interacts with YWHAG/14-3-3 protein gamma; a protein that also plays a role in MALM.

It localises to the cytoplasm. The protein resides in the cytosol. It is found in the mitochondrion outer membrane. The protein localises to the mitochondrion matrix. Its function is as follows. Key regulator of mitochondrial quality that mediates the repairing or degradation of unhealthy mitochondria in response to mitochondrial damage. Mediator of mitochondrial protein catabolic process (also named MALM) by mediating the degradation of damaged proteins inside mitochondria by promoting the accumulation in the mitochondrial matrix of hydrolases that are characteristic of the lysosomal lumen. Also involved in mitochondrion degradation of damaged mitochondria by promoting the formation of vacuole-like structures (named MIV), which engulf and degrade unhealthy mitochondria by accumulating lysosomes. The physical interaction of SPATA18/MIEAP, BNIP3 and BNIP3L/NIX at the mitochondrial outer membrane regulates the opening of a pore in the mitochondrial double membrane in order to mediate the translocation of lysosomal proteins from the cytoplasm to the mitochondrial matrix. Binds cardiolipin. May form molecular condensates (non-membrane-bounded organelles) within mitochondria that compartmentalize and promote cardiolipin metabolism. This Bos taurus (Bovine) protein is Mitochondria-eating protein (SPATA18).